Consider the following 735-residue polypeptide: Rho GTPase-activating protein SYDE1 (735 aa).

Disordered regions lie at residues 1 to 253, 601 to 655, and 669 to 706; these read MAEP…PYEV, PDTR…AGDW, and FLSG…FDAP. Residues 14 to 47 show a composition bias toward basic and acidic residues; that stretch reads RGREKLPRKKSDAKDRGRPAQRSEPKPPEPEPRV. Low complexity predominate over residues 151-160; that stretch reads PTKTSRTKSP. A phosphoserine mark is found at serine 224, serine 231, serine 235, and serine 244. The C2 domain maps to 249–366; sequence RPYEVGPSAR…FRGCQAQQLA (118 aa). The Rho-GAP domain occupies 398–604; that stretch reads LPLQLLVERE…YLLQSWPDTR (207 aa). Residues 669–679 show a composition bias toward basic and acidic residues; that stretch reads FLSGPDYDHVT. A phosphoserine mark is found at serine 681 and serine 683.

Post-translationally, palmitoylated. Probably palmitoylated by ZDHHC3 and ZDHHC7.

Its function is as follows. GTPase activator for the Rho-type GTPases. As a GCM1 downstream effector, it is involved in placental development and positively regulates trophoblast cells migration. It regulates cytoskeletal remodeling by controlling the activity of Rho GTPases including RHOA, CDC42 and RAC1. This chain is Rho GTPase-activating protein SYDE1 (Syde1), found in Rattus norvegicus (Rat).